A 476-amino-acid polypeptide reads, in one-letter code: tRNA(Ile)-lysidine synthase (476 aa).

Position 30 to 35 (30 to 35 (SGGPDS)) interacts with ATP.

This sequence belongs to the tRNA(Ile)-lysidine synthase family.

The protein localises to the cytoplasm. It carries out the reaction cytidine(34) in tRNA(Ile2) + L-lysine + ATP = lysidine(34) in tRNA(Ile2) + AMP + diphosphate + H(+). Functionally, ligates lysine onto the cytidine present at position 34 of the AUA codon-specific tRNA(Ile) that contains the anticodon CAU, in an ATP-dependent manner. Cytidine is converted to lysidine, thus changing the amino acid specificity of the tRNA from methionine to isoleucine. This is tRNA(Ile)-lysidine synthase from Bacillus cereus (strain ZK / E33L).